The following is a 375-amino-acid chain: MAALMESVVGRALKFSSTANFRSIRRGETPTLCIKSFSTIMSPPSKAIVYEEHGSPDSVTRLVNLPPVEVKENDVCVKMIAAPINPSDINRIEGVYPVRPPVPAVGGYEGVGEVYAVGSNVNGFSPGDWVIPSPPSSGTWQTYVVKEESVWHKIDKECPMEYAATITVNPLTALRMLEDFVNLNSGDSVVQNGATSIVGQCVIQLARLRGISTINLIRDRAGSDEAREQLKALGADEVFSESQLNVKNVKSLLGNLPEPALGFNCVGGNAASLVLKYLREGGTMVTYGGMSKKPITVSTTSFIFKDLALRGFWLQSWLSMGKVKECREMIDYLLGLARDGKLKYETELVPFEEFPVALDKALGKLGRQPKQVITF.

The N-terminal 37 residues, 1–37 (MAALMESVVGRALKFSSTANFRSIRRGETPTLCIKSF), are a transit peptide targeting the mitochondrion. The active-site Proton donor is Tyr96. NADP(+) contacts are provided by residues Asn169, 195 to 198 (TSIV), 218 to 220 (RDR), 287 to 290 (YGGM), 312 to 314 (FWL), and Lys370.

The protein belongs to the zinc-containing alcohol dehydrogenase family. Quinone oxidoreductase subfamily. In terms of assembly, homodimer.

The protein resides in the mitochondrion. The enzyme catalyses a 2,3-saturated acyl-[ACP] + NADP(+) = a (2E)-enoyl-[ACP] + NADPH + H(+). Its function is as follows. Catalyzes the NADPH-dependent reduction of trans-2-enoyl thioesters in mitochondrial fatty acid synthesis (fatty acid synthesis type II). Fatty acid chain elongation in mitochondria uses acyl carrier protein (ACP) as an acyl group carrier, but the enzyme accepts both ACP and CoA thioesters as substrates in vitro. The chain is Enoyl-[acyl-carrier-protein] reductase, mitochondrial from Arabidopsis thaliana (Mouse-ear cress).